The sequence spans 294 residues: Protoheme IX farnesyltransferase 1 (294 aa).

Transmembrane regions (helical) follow at residues 8–28 (VTKPGIIMGNLISVAGGFLLA), 35–55 (PWLMVATLIGLSLVVASGCAI), 82–102 (AMAALCHGVVLGIIGFGLLIA), 107–127 (AAVFFAAFGYFIYVGVYSLYM), 132–152 (VYGTFIGSLSGAVPPVVGYCA), 162–182 (LILLVMFSLWQMPHSYAIAIF), 208–228 (IVLYIAIYALVVMLLPISGYT), 229–249 (GAAFMAVACITSFWWLLMALR), and 263–283 (QVFAFSIINITALSIAMAVDY).

Belongs to the UbiA prenyltransferase family. Protoheme IX farnesyltransferase subfamily.

It localises to the cell inner membrane. The catalysed reaction is heme b + (2E,6E)-farnesyl diphosphate + H2O = Fe(II)-heme o + diphosphate. It participates in porphyrin-containing compound metabolism; heme O biosynthesis; heme O from protoheme: step 1/1. Its function is as follows. Converts heme B (protoheme IX) to heme O by substitution of the vinyl group on carbon 2 of heme B porphyrin ring with a hydroxyethyl farnesyl side group. The protein is Protoheme IX farnesyltransferase 1 of Pseudoalteromonas translucida (strain TAC 125).